The sequence spans 298 residues: Iron-regulated virulence regulatory protein IrgB (298 aa).

The 59-residue stretch at 1–59 folds into the HTH lysR-type domain; sequence MQDLSAVKAFHALCQHKSLTAAAKALEQPKSTLSRRLAQLEEDLGQSLLMRQGNRLTLT. Positions 19 to 38 form a DNA-binding region, H-T-H motif; it reads LTAAAKALEQPKSTLSRRLA.

Belongs to the LysR transcriptional regulatory family.

Its function is as follows. Transcription activation of the irgA gene. In the presence of sufficient iron, transcription of both irgA and irgB is negatively regulated by a fur-like protein. In low iron conditions, negative regulation of transcription is removed, and production of IrgB leads to positive transcriptional activation of irgA. The polypeptide is Iron-regulated virulence regulatory protein IrgB (irgB) (Vibrio cholerae serotype O1 (strain ATCC 39541 / Classical Ogawa 395 / O395)).